Consider the following 576-residue polypeptide: Proline--tRNA ligase (576 aa).

Belongs to the class-II aminoacyl-tRNA synthetase family. ProS type 1 subfamily. In terms of assembly, homodimer.

Its subcellular location is the cytoplasm. The enzyme catalyses tRNA(Pro) + L-proline + ATP = L-prolyl-tRNA(Pro) + AMP + diphosphate. In terms of biological role, catalyzes the attachment of proline to tRNA(Pro) in a two-step reaction: proline is first activated by ATP to form Pro-AMP and then transferred to the acceptor end of tRNA(Pro). As ProRS can inadvertently accommodate and process non-cognate amino acids such as alanine and cysteine, to avoid such errors it has two additional distinct editing activities against alanine. One activity is designated as 'pretransfer' editing and involves the tRNA(Pro)-independent hydrolysis of activated Ala-AMP. The other activity is designated 'posttransfer' editing and involves deacylation of mischarged Ala-tRNA(Pro). The misacylated Cys-tRNA(Pro) is not edited by ProRS. The chain is Proline--tRNA ligase from Leptospira borgpetersenii serovar Hardjo-bovis (strain L550).